The sequence spans 171 residues: Large ribosomal subunit protein bL9 (171 aa).

This sequence belongs to the bacterial ribosomal protein bL9 family.

Its function is as follows. Binds to the 23S rRNA. The polypeptide is Large ribosomal subunit protein bL9 (Rickettsia conorii (strain ATCC VR-613 / Malish 7)).